A 201-amino-acid polypeptide reads, in one-letter code: Orotate phosphoribosyltransferase (201 aa).

113–121 (EDIITTGKS) contributes to the 5-phospho-alpha-D-ribose 1-diphosphate binding site. Orotate-binding residues include Thr117 and Arg145.

This sequence belongs to the purine/pyrimidine phosphoribosyltransferase family. PyrE subfamily. In terms of assembly, homodimer. Mg(2+) serves as cofactor.

The catalysed reaction is orotidine 5'-phosphate + diphosphate = orotate + 5-phospho-alpha-D-ribose 1-diphosphate. Its pathway is pyrimidine metabolism; UMP biosynthesis via de novo pathway; UMP from orotate: step 1/2. Catalyzes the transfer of a ribosyl phosphate group from 5-phosphoribose 1-diphosphate to orotate, leading to the formation of orotidine monophosphate (OMP). The polypeptide is Orotate phosphoribosyltransferase (Helicobacter pylori (strain Shi470)).